A 258-amino-acid polypeptide reads, in one-letter code: Imidazole glycerol phosphate synthase subunit HisF (258 aa).

Residues Asp12 and Asp131 contribute to the active site.

It belongs to the HisA/HisF family. As to quaternary structure, heterodimer of HisH and HisF.

It localises to the cytoplasm. It carries out the reaction 5-[(5-phospho-1-deoxy-D-ribulos-1-ylimino)methylamino]-1-(5-phospho-beta-D-ribosyl)imidazole-4-carboxamide + L-glutamine = D-erythro-1-(imidazol-4-yl)glycerol 3-phosphate + 5-amino-1-(5-phospho-beta-D-ribosyl)imidazole-4-carboxamide + L-glutamate + H(+). It participates in amino-acid biosynthesis; L-histidine biosynthesis; L-histidine from 5-phospho-alpha-D-ribose 1-diphosphate: step 5/9. IGPS catalyzes the conversion of PRFAR and glutamine to IGP, AICAR and glutamate. The HisF subunit catalyzes the cyclization activity that produces IGP and AICAR from PRFAR using the ammonia provided by the HisH subunit. The protein is Imidazole glycerol phosphate synthase subunit HisF of Nitrosomonas eutropha (strain DSM 101675 / C91 / Nm57).